A 517-amino-acid chain; its full sequence is ATP synthase subunit alpha 2 (517 aa).

An ATP-binding site is contributed by 173–180 (GDRQTGKT).

Belongs to the ATPase alpha/beta chains family. In terms of assembly, F-type ATPases have 2 components, CF(1) - the catalytic core - and CF(0) - the membrane proton channel. CF(1) has five subunits: alpha(3), beta(3), gamma(1), delta(1), epsilon(1). CF(0) has three main subunits: a(1), b(2) and c(9-12). The alpha and beta chains form an alternating ring which encloses part of the gamma chain. CF(1) is attached to CF(0) by a central stalk formed by the gamma and epsilon chains, while a peripheral stalk is formed by the delta and b chains.

The protein localises to the cell inner membrane. The catalysed reaction is ATP + H2O + 4 H(+)(in) = ADP + phosphate + 5 H(+)(out). Produces ATP from ADP in the presence of a proton gradient across the membrane. The alpha chain is a regulatory subunit. This chain is ATP synthase subunit alpha 2, found in Legionella pneumophila (strain Corby).